The chain runs to 249 residues: MMAGRKGYQSVMDENCHDKTESAYTDDRSLNGSSGSSCLKNNVIAFFLGAAVVAATQYVSIDSSLTKAVEVTSFTTSDAPAIDIAINPTRPSLDARQDFKIEGWGNQTRNDGWPSFHFEVFHFCPHLINFMYENQVHPQSRVDPSNVIYDAQHPGALAEDGFAEVLQQTLPKFYDYPVGYRLNDRPAEISAYWTLHMRIARGSEDSQWHDFASSLPEGINRIYVKKPLQWNGDHVTLFSSQTGYNILVY.

Functionally, unknown function: part of the gene cluster that mediates the biosynthesis of domoic acid (DA) and derivatives, natural products with neurochemical activity acting as ionotropic glutamate receptor (iGluR) agonists, thus being neurotoxins causing amnesic shellfish poisoning (ASP). The sequence is that of Domoic acid biosynthesis cluster protein B from Pseudo-nitzschia multiseries (Marine planktonic diatom).